The following is a 374-amino-acid chain: Ribosomal RNA large subunit methyltransferase M (374 aa).

Residues S188, 221 to 224, D240, D260, and D276 each bind S-adenosyl-L-methionine; that span reads CPGG. K305 functions as the Proton acceptor in the catalytic mechanism.

It belongs to the class I-like SAM-binding methyltransferase superfamily. RNA methyltransferase RlmE family. RlmM subfamily. In terms of assembly, monomer.

The protein localises to the cytoplasm. It carries out the reaction cytidine(2498) in 23S rRNA + S-adenosyl-L-methionine = 2'-O-methylcytidine(2498) in 23S rRNA + S-adenosyl-L-homocysteine + H(+). Its function is as follows. Catalyzes the 2'-O-methylation at nucleotide C2498 in 23S rRNA. The protein is Ribosomal RNA large subunit methyltransferase M of Edwardsiella ictaluri (strain 93-146).